Consider the following 422-residue polypeptide: Tryptophan synthase beta chain 1 (422 aa).

Lys107 is subject to N6-(pyridoxal phosphate)lysine.

This sequence belongs to the TrpB family. As to quaternary structure, tetramer of two alpha and two beta chains. Pyridoxal 5'-phosphate serves as cofactor.

The catalysed reaction is (1S,2R)-1-C-(indol-3-yl)glycerol 3-phosphate + L-serine = D-glyceraldehyde 3-phosphate + L-tryptophan + H2O. The protein operates within amino-acid biosynthesis; L-tryptophan biosynthesis; L-tryptophan from chorismate: step 5/5. Its function is as follows. The beta subunit is responsible for the synthesis of L-tryptophan from indole and L-serine. This is Tryptophan synthase beta chain 1 (trpB1) from Sulfurisphaera tokodaii (strain DSM 16993 / JCM 10545 / NBRC 100140 / 7) (Sulfolobus tokodaii).